Here is a 784-residue protein sequence, read N- to C-terminus: Melanoma-associated antigen D1 (784 aa).

Residues 41 to 67 (PTNQATAAASGPNASPQSSQPPSANEV) form a disordered region. Residues 47–65 (AAASGPNASPQSSQPPSAN) are compositionally biased toward low complexity. Residue tyrosine 97 is modified to Phosphotyrosine. Composition is skewed to polar residues over residues 195–214 (PTAETQTQNINQAKMATSQA), 232–246 (AQTSADGSQAQNLES), 259–269 (NNLNVEESSSG), and 306–320 (LAWQNPSGWQNQPAR). The disordered stretch occupies residues 195 to 339 (PTAETQTQNI…PARQTPPAWQ (145 aa)). 19 tandem repeats follow at residues 302–307 (WQTPLA), 308–313 (WQNPSG), 314–319 (WQNQPA), 338–343 (WQNPVA), 344–349 (WQNPVI), 350–355 (WPNPVI), 356–361 (WQNPVI), 362–367 (WPNPIV), 368–373 (WPGPVV), 374–379 (WPNPLA), 380–385 (WQNPPG), 386–391 (WQTPPG), 392–397 (WQTPPG), 398–403 (WQGPPD), 404–409 (WQGPPD), 410–415 (WPLPPD), 416–421 (WPLPPD), 422–427 (WPLPTD), and 428–433 (WPLPPD). Residues 302-450 (WQTPLAWQNP…VPPDWQNLRP (149 aa)) are 22 X 6 AA tandem repeats of W-[PQ]-X-P-X-X. A disordered region spans residues 379-418 (AWQNPPGWQTPPGWQTPPGWQGPPDWQGPPDWPLPPDWPL). A compositionally biased stretch (low complexity) spans 383 to 403 (PPGWQTPPGWQTPPGWQGPPD). Pro residues predominate over residues 404–418 (WQGPPDWPLPPDWPL). The 20; approximate repeat unit spans residues 434 to 438 (WIPTD). Repeat copies occupy residues 439-444 (WPVPPD) and 445-450 (WQNLRP). The tract at residues 441–471 (VPPDWQNLRPSPNLRPSPNSRASQNLGASQP) is disordered. Positions 447–461 (NLRPSPNLRPSPNSR) are enriched in low complexity. One can recognise an MAGE domain in the interval 477–675 (LQERANKLVK…RDWTAQFMEA (199 aa)).

As to quaternary structure, interacts with DLX5, DLX7 and MSX2 and forms homomultimers. Interacts with UNC5A. Interacts with TRIM28 and PJA1. Interacts with NGFR/p75NTR and RORA.

The protein localises to the cytoplasm. It localises to the cell membrane. It is found in the nucleus. Functionally, involved in the apoptotic response after nerve growth factor (NGF) binding in neuronal cells. Inhibits cell cycle progression, and facilitates NGFR-mediated apoptosis. May act as a regulator of the function of DLX family members. May enhance ubiquitin ligase activity of RING-type zinc finger-containing E3 ubiquitin-protein ligases. Proposed to act through recruitment and/or stabilization of the Ubl-conjugating enzyme (E2) at the E3:substrate complex. Plays a role in the circadian rhythm regulation. May act as RORA co-regulator, modulating the expression of core clock genes such as BMAL1 and NFIL3, induced, or NR1D1, repressed. The chain is Melanoma-associated antigen D1 (MAGED1) from Sus scrofa (Pig).